The primary structure comprises 449 residues: MSTPSARTGGSLDAWFKISQRGSTVRQEVVAGLTTFLAMVYSVIVVPGMLGKAGFPPAAVFVATCLVAGLGSIVMGLWANLPLAIGCAISLTAFTAFSLVLGQHISVPVALGAVFLMGVLFTVISATGIRSWILRNLPHGVAHGTGIGIGLFLLLIAANGVGLVIKNPLDGLPVALGDFATFPVIMSLVGLAVIIGLEKLKVPGGILLTIIGISIVGLIFDPNVHFSGVFAMPSLSDENGNSLIGSLDIMGALNPVVLPSVLALVMTAVFDATGTIRAVAGQANLLDKDGQIIDGGKALTTDSMSSVFSGLVGAAPAAVYIESAAGTAAGGKTGLTAITVGVLFLLILFLSPLSYLVPGYATAPALMYVGLLMLSNVAKIDFADFVDAMAGLVTAVFIVLTCNIVTGIMIGFATLVIGRLVSGEWRKLNIGTVVIAVALVTFYAGGWAI.

The Cytoplasmic portion of the chain corresponds to 1–25 (MSTPSARTGGSLDAWFKISQRGSTV). The chain crosses the membrane as a helical span at residues 26–49 (RQEVVAGLTTFLAMVYSVIVVPGM). Residues 50–59 (LGKAGFPPAA) are Periplasmic-facing. The helical transmembrane segment at 60 to 78 (VFVATCLVAGLGSIVMGLW) threads the bilayer. Topologically, residues 79–80 (AN) are cytoplasmic. Residues 81–97 (LPLAIGCAISLTAFTAF) traverse the membrane as a discontinuously helical segment. Topologically, residues 98–109 (SLVLGQHISVPV) are periplasmic. The chain crosses the membrane as a helical span at residues 110-129 (ALGAVFLMGVLFTVISATGI). Residues 130-141 (RSWILRNLPHGV) are Cytoplasmic-facing. A helical membrane pass occupies residues 142–162 (AHGTGIGIGLFLLLIAANGVG). At 163 to 180 (LVIKNPLDGLPVALGDFA) the chain is on the periplasmic side. The helical transmembrane segment at 181–198 (TFPVIMSLVGLAVIIGLE) threads the bilayer. The Cytoplasmic segment spans residues 199–202 (KLKV). A helical membrane pass occupies residues 203-222 (PGGILLTIIGISIVGLIFDP). The Periplasmic portion of the chain corresponds to 223–254 (NVHFSGVFAMPSLSDENGNSLIGSLDIMGALN). Residues 255-283 (PVVLPSVLALVMTAVFDATGTIRAVAGQA) form a helical membrane-spanning segment. The Cytoplasmic portion of the chain corresponds to 284–296 (NLLDKDGQIIDGG). A helical membrane pass occupies residues 297 to 312 (KALTTDSMSSVFSGLV). The Periplasmic segment spans residues 313–314 (GA). A discontinuously helical membrane pass occupies residues 315–330 (APAAVYIESAAGTAAG). At 331 to 334 (GKTG) the chain is on the cytoplasmic side. Residues 335–349 (LTAITVGVLFLLILF) traverse the membrane as a helical segment. At 350 to 360 (LSPLSYLVPGY) the chain is on the periplasmic side. The chain crosses the membrane as a helical span at residues 361-380 (ATAPALMYVGLLMLSNVAKI). Residues 381–385 (DFADF) lie on the Cytoplasmic side of the membrane. Positions 386 to 421 (VDAMAGLVTAVFIVLTCNIVTGIMIGFATLVIGRLV) form an intramembrane region, discontinuously helical. The Cytoplasmic segment spans residues 422 to 449 (SGEWRKLNIGTVVIAVALVTFYAGGWAI).

Belongs to the nucleobase:cation symporter-2 (NCS2) (TC 2.A.40) family. Azg-like subfamily.

The protein localises to the cell inner membrane. High-affinity transporter for guanine and hypoxanthine. The sequence is that of Guanine/hypoxanthine permease GhxP (ghxP) from Escherichia coli O157:H7.